Reading from the N-terminus, the 898-residue chain is MNDAECLSHLLQVCARKTEEFVRTLDSKHMVWLLEIEEEARKMFSSDFNAEPELMPKTPSQKRRRKKRTSIVPDENRDPSGRRISRRRSSANWSNSVRRLSIRNQNKTNEDSMQEEPAQPKRMTRARAQASIMCPSVVEMALPESPSQLYQKNVQVTISEQDRRSAEQKLVGSATEESEMKTDVLPVPKIAKDTISEIVNTVVPPPVPETPAVPVTPENKSRAAAKLKIAGSSTPIEAAEMVDLTCESPRPANELANEQPLNLTNQSVTPTGSKSDRRSVRRSLVVVKPSSRRSSLASQFSLASKRESMTREAVRKSIRQSIAKKKAAMETSSASSQRSCQSSIEIIDDEITIKIRPETAPSESVSEEAHTIESPRRSLRSRTFKKIAISNLPDSEEPQRRVTRQMVAMDAEPTPETTDDAQNIRRKSYKRAVDELSDDERPSEGERSPPRKKTPSPPCPPSKIVKPPPHMKSFLHTVQKNQLLMMTPGSIGKNIMMKSFIKRNTPLKMDPKEKERQRLDALRKKEEAELQRKQKIEEGKKRKQEELKLRREERLRKVLQARERVEQLEEEKKKKIEQKFAQIDEKSEKVREDRMAEEKAKKKITAKKQEEVECRRRQEEEARKLKAKQMEEEERRHQDLLQKKREEEELERQKKIAEAKRLAEQRQAEQERERQREQQLLAEKERLRAERERIEREKALQLQRELERAAQEKEQQRREAEERKKREQQERLEQERLERLHKEQEAKRLQEEQQRKAKEQAAAASAPVMNVTVDMQNSPACESYEMTPKSYKAPSVKVNEENYGMDLNSDDSTDDESQPRKPIPAWASGNLLAQAIRQQYYKPMDVDRMYGTIDSPKLEELFYKSKPRYYKRTSSAVWHSPPLSSNRHHLAVGYGLKY.

Disordered regions lie at residues Ala50–Arg127, Pro251–Arg282, Glu358–Leu379, Met406–His470, Lys525–Lys548, Arg564–Glu677, Glu707–Asn770, and Asn802–Pro824. Residues Ser60–Thr69 show a composition bias toward basic residues. The span at Ser90 to Arg99 shows a compositional bias: low complexity. The segment covering Gln259 to Gly272 has biased composition (polar residues). Basic and acidic residues-rich tracts occupy residues Glu367 to Arg376 and Arg431 to Pro449. The span at Pro455–His470 shows a compositional bias: pro residues. Positions Lys512 to Glu730 are SAH. Composition is skewed to basic and acidic residues over residues Arg564 to Ala600, Lys607 to Glu677, and Glu707 to Glu759. An IN box region spans residues Leu807–Pro881. Phosphoserine occurs at positions 874 and 875.

The protein belongs to the INCENP family. In terms of assembly, component of the CPC at least composed of survivin/birc5, incenp, cdca8/borealin and/or cdca9/dasra-A, and aurkb/aurora-B. Interacts (via C-terminus) with aurkb (via N-terminus and kinase domain). Interacts (via N-terminus) with birc5.1, birc5.2, cdca8 and cdca9. Interacts with mtus1.

The protein resides in the nucleus. It localises to the chromosome. Its subcellular location is the centromere. The protein localises to the cytoplasm. It is found in the cytoskeleton. The protein resides in the spindle. It localises to the midbody. Its subcellular location is the kinetochore. Functionally, component of the chromosomal passenger complex (CPC), a complex that acts as a key regulator of mitosis. The CPC complex has essential functions at the centromere in ensuring correct chromosome alignment and segregation and is required for chromatin-induced microtubule stabilization and spindle assembly. Acts as a scaffold regulating CPC localization and activity. The C-terminus associates with aurkb/aurora-B, the N-terminus associated with cdca8/borealin and/or cdca9/dasra-A tethers the CPC to the inner centromere, and the microtubule binding activity within the central SAH domain directs aurkb/aurora-B toward substrates near microtubules. Activates aurkb. The chain is Inner centromere protein (incenp) from Xenopus tropicalis (Western clawed frog).